Consider the following 79-residue polypeptide: UPF0291 protein BH2353 (79 aa).

Residues 57-79 (GAGNDVTPDKLKQSKNKYRNDIH) are disordered. Residues 63 to 79 (TPDKLKQSKNKYRNDIH) are compositionally biased toward basic and acidic residues.

It belongs to the UPF0291 family.

Its subcellular location is the cytoplasm. This Halalkalibacterium halodurans (strain ATCC BAA-125 / DSM 18197 / FERM 7344 / JCM 9153 / C-125) (Bacillus halodurans) protein is UPF0291 protein BH2353.